Consider the following 325-residue polypeptide: Probable transcription factor At4g01260 (325 aa).

The tract at residues 1–98 (MAPKQLKKIE…SMGEEDVKKK (98 aa)) is disordered. 2 stretches are compositionally biased toward low complexity: residues 23-32 (ASSGESATSG) and 49-69 (KPVVVSKPSGSKTTTKPESST). Basic and acidic residues predominate over residues 73–83 (RSFEKTDEMSK).

Belongs to the GeBP family.

The protein is Probable transcription factor At4g01260 of Arabidopsis thaliana (Mouse-ear cress).